A 105-amino-acid polypeptide reads, in one-letter code: MTTNRLVLSGTVCKTPVRKVSPSGIPHCQFVLEHRSTQQEAGFSRQTWCRMPIVVSGQQSQALTHSITVGSQLTVEGFISCHQGRNGLNKLVLHAEQIEFIDSGD.

The SSB domain occupies 1-102 (MTTNRLVLSG…LHAEQIEFID (102 aa)).

This sequence belongs to the PriB family. Homodimer. Interacts with PriA and DnaT. Component of the replication restart primosome. Primosome assembly occurs via a 'hand-off' mechanism. PriA binds to replication forks, subsequently PriB then DnaT bind; DnaT then displaces ssDNA to generate the helicase loading substrate.

Its function is as follows. Involved in the restart of stalled replication forks, which reloads the replicative helicase on sites other than the origin of replication; the PriA-PriB pathway is the major replication restart pathway. During primosome assembly it facilitates complex formation between PriA and DnaT on DNA; stabilizes PriA on DNA. Stimulates the DNA unwinding activity of PriA helicase. The polypeptide is Replication restart protein PriB (Yersinia pseudotuberculosis serotype O:1b (strain IP 31758)).